We begin with the raw amino-acid sequence, 159 residues long: Small ribosomal subunit protein uS7 (159 aa).

This sequence belongs to the universal ribosomal protein uS7 family. Part of the 30S ribosomal subunit. Contacts proteins S9 and S11.

In terms of biological role, one of the primary rRNA binding proteins, it binds directly to 16S rRNA where it nucleates assembly of the head domain of the 30S subunit. Is located at the subunit interface close to the decoding center, probably blocks exit of the E-site tRNA. The chain is Small ribosomal subunit protein uS7 from Wolbachia pipientis wMel.